A 330-amino-acid chain; its full sequence is Glucan endo-1,3-beta-glucosidase GIII (330 aa).

An N-terminal signal peptide occupies residues 1–25 (MARKGVDVAVALVLVALAAFPAVHS). Glu117 serves as the catalytic Proton donor. Glu255 acts as the Nucleophile in catalysis.

This sequence belongs to the glycosyl hydrolase 17 family.

It catalyses the reaction Hydrolysis of (1-&gt;3)-beta-D-glucosidic linkages in (1-&gt;3)-beta-D-glucans.. In terms of biological role, may provide a degree of protection against microbial invasion of germinated barley grain through its ability to degrade fungal cell wall polysaccharides. The polypeptide is Glucan endo-1,3-beta-glucosidase GIII (Hordeum vulgare (Barley)).